Consider the following 565-residue polypeptide: Phosphomethylpyrimidine synthase (565 aa).

Substrate contacts are provided by residues Asn201, Met230, Tyr259, His295, 315–317 (SRG), 356–359 (DGLR), and Glu395. His399 is a binding site for Zn(2+). Substrate is bound at residue Tyr422. Position 463 (His463) interacts with Zn(2+). [4Fe-4S] cluster is bound by residues Cys543, Cys546, and Cys551.

Belongs to the ThiC family. As to quaternary structure, homodimer. It depends on [4Fe-4S] cluster as a cofactor.

The catalysed reaction is 5-amino-1-(5-phospho-beta-D-ribosyl)imidazole + S-adenosyl-L-methionine = 4-amino-2-methyl-5-(phosphooxymethyl)pyrimidine + CO + 5'-deoxyadenosine + formate + L-methionine + 3 H(+). The protein operates within cofactor biosynthesis; thiamine diphosphate biosynthesis. Its function is as follows. Catalyzes the synthesis of the hydroxymethylpyrimidine phosphate (HMP-P) moiety of thiamine from aminoimidazole ribotide (AIR) in a radical S-adenosyl-L-methionine (SAM)-dependent reaction. The polypeptide is Phosphomethylpyrimidine synthase (Ehrlichia canis (strain Jake)).